We begin with the raw amino-acid sequence, 372 residues long: 2-aminoethylphosphonate--pyruvate transaminase 2 (372 aa).

The residue at position 192 (K192) is an N6-(pyridoxal phosphate)lysine.

It belongs to the class-V pyridoxal-phosphate-dependent aminotransferase family. PhnW subfamily. In terms of assembly, homodimer. The cofactor is pyridoxal 5'-phosphate.

The enzyme catalyses (2-aminoethyl)phosphonate + pyruvate = phosphonoacetaldehyde + L-alanine. Its function is as follows. Involved in phosphonate degradation. This Polaromonas sp. (strain JS666 / ATCC BAA-500) protein is 2-aminoethylphosphonate--pyruvate transaminase 2.